Consider the following 581-residue polypeptide: NADP-dependent malic enzyme 1 (581 aa).

The active-site Proton donor is the Tyr-129. Arg-182 lines the NADP(+) pocket. Lys-200 (proton acceptor) is an active-site residue. Residues Glu-272, Asp-273, and Asp-296 each contribute to the a divalent metal cation site. NADP(+) contacts are provided by residues Asp-296, 325-341 (LFLG…ELIA), and Asn-437.

Belongs to the malic enzymes family. In terms of assembly, homohexamers and homooctamers. It depends on Mg(2+) as a cofactor. Mn(2+) is required as a cofactor. In terms of tissue distribution, specifically expressed in roots (only in steles of secondary roots).

It is found in the cytoplasm. It carries out the reaction (S)-malate + NADP(+) = pyruvate + CO2 + NADPH. The catalysed reaction is oxaloacetate + H(+) = pyruvate + CO2. The polypeptide is NADP-dependent malic enzyme 1 (NADP-ME1) (Arabidopsis thaliana (Mouse-ear cress)).